The chain runs to 219 residues: Interleukin-12 subunit alpha (219 aa).

Positions 1–22 are cleaved as a signal peptide; it reads MCPARSLLLVATLVLLDYLSLA. N-linked (GlcNAc...) asparagine glycosylation is found at Asn24, Asn93, and Asn107. 3 disulfides stabilise this stretch: Cys37–Cys110, Cys64–Cys196, and Cys85–Cys123.

The protein belongs to the IL-6 superfamily. Heterodimer with IL12B; disulfide-linked. This heterodimer is known as interleukin IL-12. Heterodimer with EBI3/IL27B; not disulfide-linked. This heterodimer is known as interleukin IL-35. Interacts with NBR1; this interaction promotes IL-12 secretion.

Its subcellular location is the secreted. Its function is as follows. Heterodimerizes with IL12B to form the IL-12 cytokine or with EBI3/IL27B to form the IL-35 cytokine. IL-12 is primarily produced by professional antigen-presenting cells (APCs) such as B-cells and dendritic cells (DCs) as well as macrophages and granulocytes and regulates T-cell and natural killer-cell responses, induces the production of interferon-gamma (IFN-gamma), favors the differentiation of T-helper 1 (Th1) cells and is an important link between innate resistance and adaptive immunity. Mechanistically, exerts its biological effects through a receptor composed of IL12R1 and IL12R2 subunits. Binding to the receptor results in the rapid tyrosine phosphorylation of a number of cellular substrates including the JAK family kinases TYK2 and JAK2. In turn, recruited STAT4 gets phosphorylated and translocates to the nucleus where it regulates cytokine/growth factor responsive genes. As part of IL-35, plays essential roles in maintaining the immune homeostasis of the liver microenvironment and also functions as an immune-suppressive cytokine. Mediates biological events through unconventional receptors composed of IL12RB2 and gp130/IL6ST heterodimers or homodimers. Signaling requires the transcription factors STAT1 and STAT4, which form a unique heterodimer that binds to distinct DNA sites. In Macaca mulatta (Rhesus macaque), this protein is Interleukin-12 subunit alpha (IL12A).